The following is a 221-amino-acid chain: DNA replication complex GINS protein SLD5 (221 aa).

This sequence belongs to the GINS4/SLD5 family. As to quaternary structure, component of the GINS complex which is a heterotetramer of gins1/psf1, gins2/psf2, gins3/psf3 and gins4/sld5. Component of the CMG helicase complex, composed of the mcm2-7 complex, the GINS complex and cdc45.

The protein resides in the nucleus. Its subcellular location is the chromosome. It is found in the cytoplasm. Its function is as follows. Required for initiation of chromosomal DNA replication. Core component of CDC45-MCM-GINS (CMG) helicase, the molecular machine that unwinds template DNA during replication, and around which the replisome is built. The polypeptide is DNA replication complex GINS protein SLD5 (Xenopus laevis (African clawed frog)).